A 379-amino-acid polypeptide reads, in one-letter code: Class V chitinase (379 aa).

Residues 1 to 24 form the signal peptide; that stretch reads MSSTKLISLIVSITFFLTLQCSMA. A GH18 domain is found at 27 to 369; the sequence is VVKASYWFPA…RAASQAWDAT (343 aa). Glycine 99 lines the chitin pocket. Glutamate 140 (proton donor) is an active-site residue. Tyrosine 259 provides a ligand contact to chitin. Asparagine 307 and asparagine 327 each carry an N-linked (GlcNAc...) asparagine glycan. Residue tryptophan 348 participates in chitin binding.

It belongs to the glycosyl hydrolase 18 family. Chitinase class V subfamily.

It carries out the reaction Random endo-hydrolysis of N-acetyl-beta-D-glucosaminide (1-&gt;4)-beta-linkages in chitin and chitodextrins.. The catalysed reaction is Hydrolysis of N,N'-diacetylchitobiose from the non-reducing end of chitin and chitodextrins.. It participates in glycan degradation; chitin degradation. Can hydrolyze glycol chitin and chitin oligosaccharides (e.g. N-acetylglucosamine) (GlcNAc)4, (GlcNAc)5 and (GlcNAc)6. Hydrolyzes N-acetylglucosamine oligomers producing dimers from the non-reducing end of the substrates. This chain is Class V chitinase, found in Arabidopsis thaliana (Mouse-ear cress).